A 108-amino-acid polypeptide reads, in one-letter code: Nucleoid-associated protein HEAR1046 (108 aa).

Residues Thr86–Phe108 form a disordered region. Positions Pro99–Phe108 are enriched in pro residues.

The protein belongs to the YbaB/EbfC family. Homodimer.

It localises to the cytoplasm. Its subcellular location is the nucleoid. Functionally, binds to DNA and alters its conformation. May be involved in regulation of gene expression, nucleoid organization and DNA protection. The polypeptide is Nucleoid-associated protein HEAR1046 (Herminiimonas arsenicoxydans).